A 459-amino-acid chain; its full sequence is Ribulose bisphosphate carboxylase (459 aa).

Residue N111 participates in substrate binding. Catalysis depends on K166, which acts as the Proton acceptor. Substrate is bound at residue K168. Mg(2+) contacts are provided by K191, D193, and E194. Position 191 is an N6-carboxylysine (K191). The active-site Proton acceptor is the H287. R288, H321, and S368 together coordinate substrate.

It belongs to the RuBisCO large chain family. Type II subfamily. Homodimer. Mg(2+) is required as a cofactor.

It catalyses the reaction 2 (2R)-3-phosphoglycerate + 2 H(+) = D-ribulose 1,5-bisphosphate + CO2 + H2O. It carries out the reaction D-ribulose 1,5-bisphosphate + O2 = 2-phosphoglycolate + (2R)-3-phosphoglycerate + 2 H(+). In terms of biological role, ruBisCO catalyzes two reactions: the carboxylation of D-ribulose 1,5-bisphosphate, the primary event in carbon dioxide fixation, as well as the oxidative fragmentation of the pentose substrate. Both reactions occur simultaneously and in competition at the same active site. The sequence is that of Ribulose bisphosphate carboxylase from Cereibacter sphaeroides (Rhodobacter sphaeroides).